Reading from the N-terminus, the 503-residue chain is Cytochrome c-552 (503 aa).

An N-terminal signal peptide occupies residues 1–16 (MKKNTIILVGALIAIA). Histidine 102 contributes to the heme c binding site. Positions 130, 133, and 134 each coordinate heme. Residues cysteine 168, cysteine 171, histidine 172, cysteine 210, cysteine 213, and histidine 214 each contribute to the heme c site. Glutamate 216, tyrosine 217, lysine 273, and glutamine 275 together coordinate Ca(2+). Substrate is bound at residue tyrosine 217. Substrate is bound at residue histidine 276. Heme c-binding residues include histidine 287, cysteine 294, cysteine 297, histidine 298, histidine 312, cysteine 325, cysteine 328, histidine 329, and histidine 404.

This sequence belongs to the cytochrome c-552 family. Ca(2+) is required as a cofactor. Heme c serves as cofactor.

It localises to the periplasm. It carries out the reaction 6 Fe(III)-[cytochrome c] + NH4(+) + 2 H2O = 6 Fe(II)-[cytochrome c] + nitrite + 8 H(+). The protein operates within nitrogen metabolism; nitrate reduction (assimilation). In terms of biological role, catalyzes the reduction of nitrite to ammonia, consuming six electrons in the process. The chain is Cytochrome c-552 from Maridesulfovibrio salexigens (strain ATCC 14822 / DSM 2638 / NCIMB 8403 / VKM B-1763) (Desulfovibrio salexigens).